Reading from the N-terminus, the 222-residue chain is Probable transcriptional regulator ycf29 (222 aa).

The Response regulatory domain maps to 4 to 120 (KLMLVENDIV…ELLSIINNLI (117 aa)). A 4-aspartylphosphate modification is found at Asp-53. The 66-residue stretch at 139-204 (QLNHKIRLTP…LLVKYSINNN (66 aa)) folds into the HTH luxR-type domain. A DNA-binding region (H-T-H motif) is located at residues 163 to 182 (NKEISTILNTSVRNVEKYVS).

The protein resides in the plastid. It is found in the chloroplast. The sequence is that of Probable transcriptional regulator ycf29 (ycf29) from Pyropia yezoensis (Susabi-nori).